The following is a 473-amino-acid chain: Photosystem II CP43 reaction center protein (473 aa).

Positions 1–14 are excised as a propeptide; the sequence is MKTLYSPRRFYPVE. Thr15 is subject to N-acetylthreonine. Position 15 is a phosphothreonine (Thr15). The next 5 membrane-spanning stretches (helical) occupy residues 69–93, 134–155, 178–200, 255–275, and 291–312; these read LFEV…PHLA, LIGP…KDRN, KALF…RKIT, KPFA…LSYS, and WFNN…ASQA. Glu367 contacts [CaMn4O5] cluster. A helical membrane pass occupies residues 447 to 471; that stretch reads RARAAAAGFEKGIDRDLEPVLFMTP.

Belongs to the PsbB/PsbC family. PsbC subfamily. PSII is composed of 1 copy each of membrane proteins PsbA, PsbB, PsbC, PsbD, PsbE, PsbF, PsbH, PsbI, PsbJ, PsbK, PsbL, PsbM, PsbT, PsbX, PsbY, PsbZ, Psb30/Ycf12, at least 3 peripheral proteins of the oxygen-evolving complex and a large number of cofactors. It forms dimeric complexes. Binds multiple chlorophylls and provides some of the ligands for the Ca-4Mn-5O cluster of the oxygen-evolving complex. It may also provide a ligand for a Cl- that is required for oxygen evolution. PSII binds additional chlorophylls, carotenoids and specific lipids. is required as a cofactor.

The protein localises to the plastid. It localises to the chloroplast thylakoid membrane. One of the components of the core complex of photosystem II (PSII). It binds chlorophyll and helps catalyze the primary light-induced photochemical processes of PSII. PSII is a light-driven water:plastoquinone oxidoreductase, using light energy to abstract electrons from H(2)O, generating O(2) and a proton gradient subsequently used for ATP formation. This is Photosystem II CP43 reaction center protein from Welwitschia mirabilis (Tree tumbo).